Reading from the N-terminus, the 567-residue chain is MSRISRQAYADMFGPTVGDRVRLADTALWVEVEKDFTIYGEEVKFGGGKVIRDGMGQGQMLAAEAMDLVLTNALIIDHWGIVKADIGIKHGRIAVIGKAGNPDVQPGVNVPVGPGTEVIAAEGKIVTAGGVDSHIHFICPQQVDEALNSGVTTFIGGGTGPATGTNATTCTPGPWYLARMLQAADSLPINIGLLGKGNASRPDALREQIGAGAVGLKLHEDWGSTPAAIDCCLGVAEEMDIQVAIHTDTLNESGCIEDTLAAIGDRTIHTFHTEGAGGGHAPDIIRAAGQANVLPSSTNPTLPYTINTVDEHLDMLMVCHHLDPSIAEDVAFAESRIRRETIAAEDILHDMGAFAMTSSDSQAMGRVGEVVLRTWQVAHQMKLRRGPLAPDTPYSDNFRVKRYIAKYTINPALTHGIGHEVGSVEVGKLADLVLWSPAFFAVKPALVLKGGMIVTAPMGDINGSIPTPQPVHYRSMFGALGAARHATRMTFLPQAAMDRGLAEALNLRSLIGVVNGCRRVRKPDMVHNTLQPLIEVDAQTYQVRADGELLVCEPASELPLAQRYFLF.

Positions 129 to 567 constitute a Urease domain; that stretch reads GGVDSHIHFI…LPLAQRYFLF (439 aa). Residues His134, His136, and Lys217 each coordinate Ni(2+). Lys217 carries the post-translational modification N6-carboxylysine. His219 serves as a coordination point for substrate. The Ni(2+) site is built by His246 and His272. His320 (proton donor) is an active-site residue. Position 360 (Asp360) interacts with Ni(2+).

It belongs to the metallo-dependent hydrolases superfamily. Urease alpha subunit family. In terms of assembly, heterotrimer of UreA (gamma), UreB (beta) and UreC (alpha) subunits. Three heterotrimers associate to form the active enzyme. Ni cation serves as cofactor. In terms of processing, carboxylation allows a single lysine to coordinate two nickel ions.

The protein resides in the cytoplasm. The catalysed reaction is urea + 2 H2O + H(+) = hydrogencarbonate + 2 NH4(+). The protein operates within nitrogen metabolism; urea degradation; CO(2) and NH(3) from urea (urease route): step 1/1. This is Urease subunit alpha from Pseudomonas putida (strain ATCC 700007 / DSM 6899 / JCM 31910 / BCRC 17059 / LMG 24140 / F1).